The following is a 230-amino-acid chain: Large ribosomal subunit protein uL1 (230 aa).

This sequence belongs to the universal ribosomal protein uL1 family. As to quaternary structure, part of the 50S ribosomal subunit.

Its function is as follows. Binds directly to 23S rRNA. The L1 stalk is quite mobile in the ribosome, and is involved in E site tRNA release. Protein L1 is also a translational repressor protein, it controls the translation of the L11 operon by binding to its mRNA. This Bacillus mycoides (strain KBAB4) (Bacillus weihenstephanensis) protein is Large ribosomal subunit protein uL1.